The following is a 441-amino-acid chain: Thymidine phosphorylase (441 aa).

This sequence belongs to the thymidine/pyrimidine-nucleoside phosphorylase family. As to quaternary structure, homodimer.

The catalysed reaction is thymidine + phosphate = 2-deoxy-alpha-D-ribose 1-phosphate + thymine. It functions in the pathway pyrimidine metabolism; dTMP biosynthesis via salvage pathway; dTMP from thymine: step 1/2. Its function is as follows. The enzymes which catalyze the reversible phosphorolysis of pyrimidine nucleosides are involved in the degradation of these compounds and in their utilization as carbon and energy sources, or in the rescue of pyrimidine bases for nucleotide synthesis. The chain is Thymidine phosphorylase from Chromobacterium violaceum (strain ATCC 12472 / DSM 30191 / JCM 1249 / CCUG 213 / NBRC 12614 / NCIMB 9131 / NCTC 9757 / MK).